The chain runs to 223 residues: Sigma non-opioid intracellular receptor 1 (223 aa).

Residues 1–9 lie on the Lumenal side of the membrane; sequence MPWAVGRRW. The tract at residues 2–8 is targeting to endoplasmic reticulum-associated lipid droplets; sequence PWAVGRR. Residues 10–30 traverse the membrane as a helical segment; it reads AWITLFLTIVAVLIQAVWLWL. At 31–223 the chain is on the cytoplasmic side; the sequence is GTQSFVFQRE…LTTYLFGQDP (193 aa). Positions 99–106 are important for ligand-binding; sequence SLSEYVLL. Residues 177 to 223 form a C-terminal hydrophobic region region; it reads VIPSTLAFALSDTIFSTQDFLTLFYTLRAYARGLRLELTTYLFGQDP.

It belongs to the ERG2 family. In terms of assembly, homotrimer. Interacts with KCNA2; cocaine consumption leads to increased interaction. Forms a ternary complex with ANK2 and ITPR3. The complex is disrupted by agonists. Interacts with KCNA4. Interacts with RNF112 in an oxidative stress-regulated manner. As to expression, expressed in ependymocytes and neurons throughout the CNS from the olfactory bulb to the spinal cord. Expressed by progenitor, mature and satellite oligodendrocytes and by Schwann cells (at protein level). Expressed in liver, intestine, kidney, brain, lung and heart. Expressed by retinal cells.

The protein resides in the nucleus inner membrane. The protein localises to the nucleus outer membrane. It localises to the nucleus envelope. Its subcellular location is the cytoplasmic vesicle. It is found in the endoplasmic reticulum membrane. The protein resides in the membrane. The protein localises to the lipid droplet. It localises to the cell junction. Its subcellular location is the cell membrane. It is found in the cell projection. The protein resides in the growth cone. The protein localises to the postsynaptic density membrane. Functionally, functions in lipid transport from the endoplasmic reticulum and is involved in a wide array of cellular functions probably through regulation of the biogenesis of lipid microdomains at the plasma membrane. Involved in the regulation of different receptors it plays a role in BDNF signaling and EGF signaling. Also regulates ion channels like the potassium channel and could modulate neurotransmitter release. Plays a role in calcium signaling through modulation together with ANK2 of the ITP3R-dependent calcium efflux at the endoplasmic reticulum. Plays a role in several other cell functions including proliferation, survival and death. Originally identified for its ability to bind various psychoactive drugs it is involved in learning processes, memory and mood alteration. Necessary for proper mitochondrial axonal transport in motor neurons, in particular the retrograde movement of mitochondria. Plays a role in protecting cells against oxidative stress-induced cell death via its interaction with RNF112. The protein is Sigma non-opioid intracellular receptor 1 (Sigmar1) of Rattus norvegicus (Rat).